The following is a 213-amino-acid chain: MDDDDDDIPQLSSHTLAALQEFYLEQQQREGMKTSQGFNQYSVGSIEEDWQLSQFWYSDETASCLANEAIVAAGKGGRIACVSAPSVYQKLREQGGADFSVCILEYDRRFSVYGEEFIFYDYNNPLNLPEHLLPHSFDIVVADPPYLSEECLQKTAETIKYLTKGKILLCTGAIMEEQAAKHLGVKICKFIPKHSRNLANEFRCYVNYASGLD.

This sequence belongs to the class I-like SAM-binding methyltransferase superfamily. EFM5 family.

It is found in the cytoplasm. The enzyme catalyses L-lysyl-[protein] + 3 S-adenosyl-L-methionine = N(6),N(6),N(6)-trimethyl-L-lysyl-[protein] + 3 S-adenosyl-L-homocysteine + 3 H(+). Protein-lysine methyltransferase that selectively catalyzes the trimethylation of EEF1A at 'Lys-79'. The sequence is that of EEF1A lysine methyltransferase 1 from Gallus gallus (Chicken).